The following is a 460-amino-acid chain: Cell death abnormality protein 8 (460 aa).

Residues 1-45 lie on the Cytoplasmic side of the membrane; that stretch reads MYLKKHESKLLLIPKNEDKEDAGIIAVLTDRVPSVLIVRWFDLFC. The helical transmembrane segment at 46–66 threads the bilayer; the sequence is FGFAMCSYVLDFFSDIGIAIF. Residues 67–77 are Extracellular-facing; it reads HFWAGRHLSGA. The chain crosses the membrane as a helical span at residues 78–98; it reads LVLTFALIPSVIINIISMVWM. Topologically, residues 99-123 are cytoplasmic; that stretch reads LDDEMHWKRRAHPRRTGTFELNQKR. Residues 124 to 144 form a helical membrane-spanning segment; sequence FISLGKMITLCIFQMGPLFWY. At 145 to 219 the chain is on the extracellular side; that stretch reads YKALYYGWMF…YYISGKYPYW (75 aa). The chain crosses the membrane as a helical span at residues 220–240; it reads LYFQAASLTLSIISISWSVVV. The Cytoplasmic portion of the chain corresponds to 241–274; sequence QNRSLRMTRDDKVNIWPHEAVLQFCWRFLTILAR. The helical transmembrane segment at 275-295 threads the bilayer; it reads IITLVAFVLLFGIYVVFLIFG. Residues 296 to 320 are Extracellular-facing; sequence HLIVTLVHVIFLQALHIEACTHIEK. A helical transmembrane segment spans residues 321-341; the sequence is LLLLINAMIHLFTPFNMAEGN. At 342–353 the chain is on the cytoplasmic side; it reads TRYRYLVAYTVE. Residues 354–374 form a helical membrane-spanning segment; sequence FIEMMIIFLLLPTPLDAFPLI. The Extracellular segment spans residues 375–378; that stretch reads EKIR. Residues 379 to 399 form a helical membrane-spanning segment; the sequence is IGVPATFFIGIFIMLIYYKFF. At 400–460 the chain is on the cytoplasmic side; that stretch reads HPNRRQDLEA…SLLEEDECHN (61 aa).

Belongs to the XK family. Cleavage by ced-3 activates ced-8 function in promoting phosphatidylserine exposure at the surface of apoptotic cells.

Its subcellular location is the cell membrane. Functionally, acts downstream of ced-9 and caspase ced-3 to promote phosphatidylserine exposure on apoptotic cell surface, possibly by mediating phospholipid scrambling. Phosphatidylserine is a specific marker only present at the surface of apoptotic cells and acts as a specific signal for engulfment. Regulates apoptosis kinetics during embryonic development. Not required for engulfment of germ cell corpses. The chain is Cell death abnormality protein 8 from Caenorhabditis briggsae.